The chain runs to 207 residues: MASLSGPISPTNLEMFKPGVEELNPSKLLLLSNHQEGMLYPTILGSLELLSFKRERSLNLLRDKVCLLHQESQLLKLRGTGTDTTDVLLKHAMATSVNCCHDGIFTILEQDRMPKTSMAPTLTESSGSLVTRLMSIPRLTFSIGTQVAMRLFRLGFRLARYSLRVTILKAQEGLLLIPDLLHAHPVEPLVQDRVVEPILAIEPLPLV.

Belongs to the coronavirus I protein family.

The protein resides in the virion. Its function is as follows. Structural protein that is not essential for the viral replication either in tissue culture or in its natural host. The chain is Protein I (N) from Bos taurus (Bovine).